We begin with the raw amino-acid sequence, 71 residues long: MLSLVSPLLKKSIVIQLFSITVYKFKAKFWYKLPFETRLCIIKHTRPKALSVTKQVKRDYRKIAILNSMRK.

This chain is Non-structural protein 3x, found in Feline coronavirus (strain FIPV WSU-79/1146) (FCoV).